The chain runs to 541 residues: Plasminogen-binding protein PgbB (541 aa).

Composition is skewed to basic and acidic residues over residues 420 to 434 (HKAK…ENKV) and 446 to 455 (VKTRRPEPTK). The segment at 420-541 (HKAKENKQPL…RRKALEMNKK (122 aa)) is disordered. Positions 456–476 (DQNNAIQQGETKNNESKNTPI) are enriched in polar residues. The segment covering 480–541 (NAAKKEAPKP…RRKALEMNKK (62 aa)) has biased composition (basic and acidic residues).

The protein localises to the cell surface. Binds plasminogen, specifically, and in a concentration and lysine-dependent manner. Plasminogen is the precursor of plasmin, a serine protease that cleaves fibrin, fibronectin, laminin and vitronectin. Acquisition of plasminogen/plasmin could enable H.pylori to degrade host components. The polypeptide is Plasminogen-binding protein PgbB (pgbB) (Helicobacter pylori (strain J99 / ATCC 700824) (Campylobacter pylori J99)).